The primary structure comprises 105 residues: Urease subunit beta (105 aa).

The protein belongs to the urease beta subunit family. As to quaternary structure, heterotrimer of UreA (gamma), UreB (beta) and UreC (alpha) subunits. Three heterotrimers associate to form the active enzyme.

It localises to the cytoplasm. The enzyme catalyses urea + 2 H2O + H(+) = hydrogencarbonate + 2 NH4(+). Its pathway is nitrogen metabolism; urea degradation; CO(2) and NH(3) from urea (urease route): step 1/1. This is Urease subunit beta from Prochlorococcus marinus (strain MIT 9313).